The primary structure comprises 117 residues: Large ribosomal subunit protein uL18 (117 aa).

It belongs to the universal ribosomal protein uL18 family. In terms of assembly, part of the 50S ribosomal subunit; part of the 5S rRNA/L5/L18/L25 subcomplex. Contacts the 5S and 23S rRNAs.

This is one of the proteins that bind and probably mediate the attachment of the 5S RNA into the large ribosomal subunit, where it forms part of the central protuberance. The chain is Large ribosomal subunit protein uL18 from Halorhodospira halophila (strain DSM 244 / SL1) (Ectothiorhodospira halophila (strain DSM 244 / SL1)).